Consider the following 341-residue polypeptide: CRISPR-associated endonuclease Cas1 (341 aa).

3 residues coordinate Mn(2+): Glu-173, His-242, and Glu-257.

Belongs to the CRISPR-associated endonuclease Cas1 family. In terms of assembly, homodimer, forms a heterotetramer with a Cas2 homodimer. Mg(2+) serves as cofactor. Requires Mn(2+) as cofactor.

Functionally, CRISPR (clustered regularly interspaced short palindromic repeat), is an adaptive immune system that provides protection against mobile genetic elements (viruses, transposable elements and conjugative plasmids). CRISPR clusters contain spacers, sequences complementary to antecedent mobile elements, and target invading nucleic acids. CRISPR clusters are transcribed and processed into CRISPR RNA (crRNA). Acts as a dsDNA endonuclease. Involved in the integration of spacer DNA into the CRISPR cassette. The polypeptide is CRISPR-associated endonuclease Cas1 (Korarchaeum cryptofilum (strain OPF8)).